A 318-amino-acid chain; its full sequence is Thymidylate synthase (318 aa).

DUMP-binding positions include Arg25 and 180–181 (RR). Residue Cys200 is the Nucleophile of the active site. Residues 220–223 (RSGD), Asn231, and 261–263 (HIY) contribute to the dUMP site. Residue Asp223 coordinates (6R)-5,10-methylene-5,6,7,8-tetrahydrofolate. Residue Ala317 coordinates (6R)-5,10-methylene-5,6,7,8-tetrahydrofolate.

It belongs to the thymidylate synthase family. Bacterial-type ThyA subfamily. In terms of assembly, homodimer.

It is found in the cytoplasm. It catalyses the reaction dUMP + (6R)-5,10-methylene-5,6,7,8-tetrahydrofolate = 7,8-dihydrofolate + dTMP. The protein operates within pyrimidine metabolism; dTTP biosynthesis. Its function is as follows. Catalyzes the reductive methylation of 2'-deoxyuridine-5'-monophosphate (dUMP) to 2'-deoxythymidine-5'-monophosphate (dTMP) while utilizing 5,10-methylenetetrahydrofolate (mTHF) as the methyl donor and reductant in the reaction, yielding dihydrofolate (DHF) as a by-product. This enzymatic reaction provides an intracellular de novo source of dTMP, an essential precursor for DNA biosynthesis. The chain is Thymidylate synthase from Bacillus cereus (strain ZK / E33L).